An 83-amino-acid chain; its full sequence is Cytochrome c5 (83 aa).

4 residues coordinate heme c: cysteine 15, cysteine 18, histidine 19, and methionine 59. Cysteine 65 and cysteine 68 are disulfide-bonded.

The protein belongs to the cytochrome c family. As to quaternary structure, homodimer. Binds 1 heme c group covalently per subunit.

Functionally, it is unreactive with cytochrome c reductase or oxidase. This chain is Cytochrome c5, found in Azotobacter vinelandii.